Consider the following 146-residue polypeptide: 3-hydroxyacyl-[acyl-carrier-protein] dehydratase FabZ (146 aa).

Residue His49 is part of the active site.

The protein belongs to the thioester dehydratase family. FabZ subfamily.

Its subcellular location is the cytoplasm. It catalyses the reaction a (3R)-hydroxyacyl-[ACP] = a (2E)-enoyl-[ACP] + H2O. Functionally, involved in unsaturated fatty acids biosynthesis. Catalyzes the dehydration of short chain beta-hydroxyacyl-ACPs and long chain saturated and unsaturated beta-hydroxyacyl-ACPs. The sequence is that of 3-hydroxyacyl-[acyl-carrier-protein] dehydratase FabZ from Psychrobacter arcticus (strain DSM 17307 / VKM B-2377 / 273-4).